Reading from the N-terminus, the 1223-residue chain is A disintegrin and metalloproteinase with thrombospondin motifs 14 (1223 aa).

Positions 1–22 (MAPLRALLSYLLPLHCALCAAA) are cleaved as a signal peptide. A propeptide spanning residues 23 to 252 (GSRTPELHLS…QLGDTERKRR (230 aa)) is cleaved from the precursor. Asn109 carries N-linked (GlcNAc...) asparagine glycosylation. The 202-residue stretch at 259 to 460 (YSIEVLLVVD…PSYDCLLDDP (202 aa)) folds into the Peptidase M12B domain. Disulfide bonds link Cys336–Cys382, Cys376–Cys455, and Cys415–Cys441. His398 lines the Zn(2+) pocket. The active site involves Glu399. Zn(2+)-binding residues include His402 and His408. Residues 461 to 551 (FDPAWPQPPE…WKSPEQTYGQ (91 aa)) form the Disintegrin domain. N-linked (GlcNAc...) asparagine glycosylation is present at Asn475. 7 disulfides stabilise this stretch: Cys482–Cys507, Cys493–Cys516, Cys502–Cys535, Cys529–Cys540, Cys564–Cys601, Cys568–Cys606, and Cys579–Cys591. Residues 552-607 (DGGWSSWTKFGSCSRSCGGGVRSRSRSCNNPSPAYGGRLCLGPMFEYQVCNSEECP) enclose the TSP type-1 1 domain. The spacer stretch occupies residues 730-846 (LKLVQIPAGA…GSNNVLLEEM (117 aa)). TSP type-1 domains are found at residues 847–907 (DTYE…HPCS), 908–967 (QPVW…LRVP), and 968–1022 (CPAQ…PACG). The N-linked (GlcNAc...) asparagine glycan is linked to Asn941. 3 cysteine pairs are disulfide-bonded: Cys980–Cys1016, Cys984–Cys1021, and Cys995–Cys1005. N-linked (GlcNAc...) asparagine glycosylation is present at Asn1027. In terms of domain architecture, PLAC spans 1059–1097 (STEPCTGDRSVFCQMEVLDRYCSIPGYHRLCCVSCIKKA). The disordered stretch occupies residues 1100–1223 (PNPGPDPGPT…TSLPAASPVT (124 aa)). The span at 1101–1125 (NPGPDPGPTSLPPFSTPGSPLPGPQ) shows a compositional bias: pro residues. The segment covering 1199 to 1211 (PEDKGQPGEDLRH) has biased composition (basic and acidic residues).

The precursor is cleaved by a furin endopeptidase. Post-translationally, glycosylated. Can be O-fucosylated by POFUT2 on a serine or a threonine residue found within the consensus sequence C1-X(2)-(S/T)-C2-G of the TSP type-1 repeat domains where C1 and C2 are the first and second cysteine residue of the repeat, respectively. Fucosylated repeats can then be further glycosylated by the addition of a beta-1,3-glucose residue by the glucosyltransferase, B3GALTL. Fucosylation mediates the efficient secretion of ADAMTS family members. Can also be C-glycosylated with one or two mannose molecules on tryptophan residues within the consensus sequence W-X-X-W of the TPRs, and N-glycosylated. These other glycosylations can also facilitate secretion. As to expression, expressed in retina and at low levels in brain, lung and placenta. High expression in fetal tissues.

It is found in the secreted. It localises to the extracellular space. The protein localises to the extracellular matrix. Its function is as follows. Has aminoprocollagen type I processing activity in the absence of ADAMTS2. Seems to be synthesized as a latent enzyme that requires activation to display aminoprocollagen peptidase activity. Cleaves lysyl oxidase LOX at a site downstream of its propeptide cleavage site to produce a short LOX form. This chain is A disintegrin and metalloproteinase with thrombospondin motifs 14 (ADAMTS14), found in Homo sapiens (Human).